The chain runs to 324 residues: Mevalonate-3-kinase (324 aa).

Leucine 19 is a substrate binding site. Position 109 to 112 (109 to 112 (SGSS)) interacts with ATP. Positions 145 and 149 each coordinate substrate. Residues arginine 190 and serine 193 each contribute to the ATP site.

It belongs to the GHMP kinase family. In terms of assembly, homodimer.

The enzyme catalyses (R)-mevalonate + ATP = (R)-3-phosphomevalonate + ADP + H(+). It functions in the pathway isoprenoid biosynthesis; isopentenyl diphosphate biosynthesis via mevalonate pathway. In terms of biological role, catalyzes the phosphorylation of mevalonate (MVA) to yield mevalonate-3-phosphate. Functions in an alternative mevalonate pathway, which passes through mevalonate 3-phosphate rather than mevalonate 5-phosphate. Also able to catalyze the formation of isobutene via the conversion of 3-hydroxyisovalerate (3-HIV) to an unstable 3-phosphate intermediate that undergoes a spontaneous decarboxylation. This Picrophilus torridus (strain ATCC 700027 / DSM 9790 / JCM 10055 / NBRC 100828 / KAW 2/3) protein is Mevalonate-3-kinase.